Consider the following 783-residue polypeptide: MRRSLAPSQRLGVRIKSKDAFTPPLQKKNKRVCQEELQKRQSALRDATNRVELPLPIRFTANSEYEQAIAKVLARKFKVPIANYVPDYGGNRTLGVRRTIVRRALHDPQACNALVLYVPPAYTEHERMSMDPSKVQVHVVVDPILSNVLRPHQREGVRFMYECVEGKRGNFNGCIMADEMGLGKTLQCVTLTWTLLRQSPDCKPTISKAIIVSPSSLVKNWEKEFTKWLHGRMHCLAMEGGSKEDTTRALEQFAMNTATRCGTPVLLISYETFRLYAHILCKTEVGMVICDEGHRLKNSDNLTYQALMGLKTKRRVLLSGTPIQNDLTEYFSLVNFVNPEMLGTAADFKRNFENSILRGQNADSTDAERQRALQKTQELIGLVNQCIIRRTNQILTKYLPVKFEMVVCVKLTPVQLQIYTNFLKSDQVRRSLADCNEKASLTALADITTLKKLCNHPDLIYEKIAAKEKGFENSQNVLPPNYKPKDVNPELSGKFMLLDFMLAAIRANSDDKVVLISNYTQTLDLFEQLARKRKYTYVRLDGTMTIKKRSKVVDRFNDPSTDCFLFMLSSKAGGCGLNLIGANRLFMFDPDWNPANDEQAMARVWRDGQKKPCYIYRLVASGSIEEKILQRQTHKKSLSSTIIDNNESSEKHFTRDDLKDLFSFEANVLSDTHNKLKCKRCFQDVQRQPPAENTDCTSHLSQWFHCSNNRGLPDSILSQAWTASKCVSFVFHHRSQAESKPAAITEDDESEQQQQSPKRTSKNDDNDEDFDPENSAEEQFLGF.

Positions 2–9 (RRSLAPSQ) are required for chromatin remodeling, strand pairing activities and coupling of ATPase activity. Threonine 22 carries the phosphothreonine modification. Positions 165–340 (EGKRGNFNGC…FSLVNFVNPE (176 aa)) constitute a Helicase ATP-binding domain. 178 to 185 (DEMGLGKT) lines the ATP pocket. A DEGH box motif is present at residues 291 to 294 (DEGH). The Helicase C-terminal domain maps to 497–654 (LLDFMLAAIR…NNESSEKHFT (158 aa)). The segment at 737–783 (AESKPAAITEDDESEQQQQSPKRTSKNDDNDEDFDPENSAEEQFLGF) is disordered. Acidic residues predominate over residues 765–776 (DNDEDFDPENSA).

It belongs to the SNF2/RAD54 helicase family. Interacts (via N-terminus) with spn-A/Rad51.

It is found in the nucleus. Its function is as follows. Involved in mitotic DNA repair and meiotic recombination. Functions in the recombinational DNA repair pathway. Essential for interhomolog gene conversion (GC), but may have a less important role in intersister GC than spn-A/Rad51. In the presence of DNA, spn-A/Rad51 enhances the ATPase activity of okr/Rad54. The sequence is that of DNA repair and recombination protein RAD54-like from Drosophila mojavensis (Fruit fly).